The sequence spans 278 residues: MDTELLKTFLEVSRTRHFGRAAEALYLTQSAVSFRIRQLENQLGVNLFTRHRNNIRLTTAGEKLLPYAETLMNTWQAARKEVAHTSRHNEFSIGASASLWECMLNAWLGRLYQLQEPQSGLQFEARIAQRQSLVKQLHERQLDLLITTEAPKMDEFSSQLLGHFTLALYCSSPARKKSELNYLRLEWGPDFQQHETGLIAADKVPVLTTSSAELARQQLSALNGCSWLPVNWANEKGGLHTVADSATLSRPLYAIWLQNSDRYSLICDLLKTDVLDEQ.

Positions 1 to 58 (MDTELLKTFLEVSRTRHFGRAAEALYLTQSAVSFRIRQLENQLGVNLFTRHRNNIRLT) constitute an HTH lysR-type domain. A DNA-binding region (H-T-H motif) is located at residues 18–37 (FGRAAEALYLTQSAVSFRIR).

The protein belongs to the LysR transcriptional regulatory family.

Its function is as follows. Negatively regulates the transcription of the flagellar master operon flhDC by binding to the upstream region of the operon. The sequence is that of HTH-type transcriptional regulator HdfR from Salmonella dublin (strain CT_02021853).